Consider the following 201-residue polypeptide: Peptide deformylase (201 aa).

Cysteine 121 and histidine 163 together coordinate Fe cation. Residue glutamate 164 is part of the active site. Histidine 167 provides a ligand contact to Fe cation.

It belongs to the polypeptide deformylase family. Fe(2+) serves as cofactor.

The enzyme catalyses N-terminal N-formyl-L-methionyl-[peptide] + H2O = N-terminal L-methionyl-[peptide] + formate. Functionally, removes the formyl group from the N-terminal Met of newly synthesized proteins. Requires at least a dipeptide for an efficient rate of reaction. N-terminal L-methionine is a prerequisite for activity but the enzyme has broad specificity at other positions. This Synechococcus sp. (strain CC9605) protein is Peptide deformylase.